A 501-amino-acid polypeptide reads, in one-letter code: Ribose import ATP-binding protein RbsA (501 aa).

ABC transporter domains follow at residues 5 to 241 (LQLK…VGRK) and 252 to 495 (APGD…VGKL). 37–44 (GENGAGKS) lines the ATP pocket.

Belongs to the ABC transporter superfamily. Ribose importer (TC 3.A.1.2.1) family. As to quaternary structure, the complex is composed of an ATP-binding protein (RbsA), two transmembrane proteins (RbsC) and a solute-binding protein (RbsB).

It localises to the cell inner membrane. The enzyme catalyses D-ribose(out) + ATP + H2O = D-ribose(in) + ADP + phosphate + H(+). Functionally, part of the ABC transporter complex RbsABC involved in ribose import. Responsible for energy coupling to the transport system. In Shigella sonnei (strain Ss046), this protein is Ribose import ATP-binding protein RbsA.